The following is a 214-amino-acid chain: uncharacterized protein (214 aa).

CBS domains follow at residues 7 to 65 (MDKN…KKPI) and 69 to 129 (MRPV…EIPV).

This is an uncharacterized protein from Methanocaldococcus jannaschii (strain ATCC 43067 / DSM 2661 / JAL-1 / JCM 10045 / NBRC 100440) (Methanococcus jannaschii).